We begin with the raw amino-acid sequence, 221 residues long: uncharacterized protein (221 aa).

Residues 40 to 162 are disordered; that stretch reads TIEVEPSPVQ…EPPEKVELSP (123 aa). Over residues 47–60 the composition is skewed to polar residues; that stretch reads PVQQDNPPISSEQA. The span at 82–92 shows a compositional bias: low complexity; the sequence is SSAQQEATAQT.

This is an uncharacterized protein from Homo sapiens (Human).